We begin with the raw amino-acid sequence, 552 residues long: Putative transport protein PBPRA2144 (552 aa).

The next 5 helical transmembrane spans lie at 4–24, 26–46, 65–85, 95–115, and 158–178; these read IALSISILALVAVLGLWIGNW, ICGVGLGIGGVLFGGIFVGHF, FGLILFVYTIGIQVGPGFFAS, AFAALVVLLGCIVAIGLYKIF, and MGYAVAYPFGICGILLTMWIL. 2 RCK C-terminal domains span residues 188–276 and 279–361; these read KEAE…VIGE and DASL…IVGN. 6 helical membrane-spanning segments follow: residues 371–391, 394–414, 439–459, 464–484, 493–513, and 532–552; these read MLPVFVGIGLGVLLGSIPFYL, FPAAIKLGLAGGPLLVALILA, IVLFLAVVGLKSGGGFVDTLV, LSWMGYGIVITLVPLLTVGFL, YLTICGMLAGSMTDPPALAFA, and PLVMCLRILSPQILALLLWAV.

Belongs to the AAE transporter (TC 2.A.81) family. YidE subfamily.

The protein localises to the cell membrane. The sequence is that of Putative transport protein PBPRA2144 from Photobacterium profundum (strain SS9).